The sequence spans 160 residues: SsrA-binding protein (160 aa).

Belongs to the SmpB family.

It is found in the cytoplasm. In terms of biological role, required for rescue of stalled ribosomes mediated by trans-translation. Binds to transfer-messenger RNA (tmRNA), required for stable association of tmRNA with ribosomes. tmRNA and SmpB together mimic tRNA shape, replacing the anticodon stem-loop with SmpB. tmRNA is encoded by the ssrA gene; the 2 termini fold to resemble tRNA(Ala) and it encodes a 'tag peptide', a short internal open reading frame. During trans-translation Ala-aminoacylated tmRNA acts like a tRNA, entering the A-site of stalled ribosomes, displacing the stalled mRNA. The ribosome then switches to translate the ORF on the tmRNA; the nascent peptide is terminated with the 'tag peptide' encoded by the tmRNA and targeted for degradation. The ribosome is freed to recommence translation, which seems to be the essential function of trans-translation. The sequence is that of SsrA-binding protein from Salmonella arizonae (strain ATCC BAA-731 / CDC346-86 / RSK2980).